Consider the following 320-residue polypeptide: ATP-dependent 6-phosphofructokinase (320 aa).

Gly11 serves as a coordination point for ATP. 21 to 25 is a binding site for ADP; that stretch reads RAVTK. Residues 72 to 73 and 102 to 105 each bind ATP; these read RF and GDGS. Asp103 contributes to the Mg(2+) binding site. 125-127 is a substrate binding site; it reads TID. The Proton acceptor role is filled by Asp127. An ADP-binding site is contributed by Arg154. Substrate is bound by residues Arg162 and 169 to 171; that span reads MGR. Residues 185 to 187 and 213 to 215 each bind ADP; these read GAD and KDH. Residues Glu222, Arg243, and 249–252 contribute to the substrate site; that span reads HMQR.

Belongs to the phosphofructokinase type A (PFKA) family. ATP-dependent PFK group I subfamily. Prokaryotic clade 'B1' sub-subfamily. Homotetramer. Mg(2+) serves as cofactor.

The protein localises to the cytoplasm. It catalyses the reaction beta-D-fructose 6-phosphate + ATP = beta-D-fructose 1,6-bisphosphate + ADP + H(+). It functions in the pathway carbohydrate degradation; glycolysis; D-glyceraldehyde 3-phosphate and glycerone phosphate from D-glucose: step 3/4. Allosterically activated by ADP and other diphosphonucleosides, and allosterically inhibited by phosphoenolpyruvate. In terms of biological role, catalyzes the phosphorylation of D-fructose 6-phosphate to fructose 1,6-bisphosphate by ATP, the first committing step of glycolysis. The sequence is that of ATP-dependent 6-phosphofructokinase from Lactobacillus acidophilus (strain ATCC 700396 / NCK56 / N2 / NCFM).